The sequence spans 142 residues: Large ribosomal subunit protein uL11 (142 aa).

This sequence belongs to the universal ribosomal protein uL11 family. Part of the ribosomal stalk of the 50S ribosomal subunit. Interacts with L10 and the large rRNA to form the base of the stalk. L10 forms an elongated spine to which L12 dimers bind in a sequential fashion forming a multimeric L10(L12)X complex. Post-translationally, one or more lysine residues are methylated.

Functionally, forms part of the ribosomal stalk which helps the ribosome interact with GTP-bound translation factors. The sequence is that of Large ribosomal subunit protein uL11 from Shewanella halifaxensis (strain HAW-EB4).